Consider the following 388-residue polypeptide: Succinate--CoA ligase [ADP-forming] subunit beta (388 aa).

An ATP-grasp domain is found at lysine 9 to histidine 244. Residues lysine 46, glycine 53–glycine 55, glutamate 99, threonine 102, and glutamate 107 contribute to the ATP site. Residues asparagine 199 and aspartate 213 each coordinate Mg(2+). Substrate is bound by residues asparagine 264 and glycine 321 to valine 323.

The protein belongs to the succinate/malate CoA ligase beta subunit family. As to quaternary structure, heterotetramer of two alpha and two beta subunits. It depends on Mg(2+) as a cofactor.

The catalysed reaction is succinate + ATP + CoA = succinyl-CoA + ADP + phosphate. The enzyme catalyses GTP + succinate + CoA = succinyl-CoA + GDP + phosphate. It functions in the pathway carbohydrate metabolism; tricarboxylic acid cycle; succinate from succinyl-CoA (ligase route): step 1/1. Functionally, succinyl-CoA synthetase functions in the citric acid cycle (TCA), coupling the hydrolysis of succinyl-CoA to the synthesis of either ATP or GTP and thus represents the only step of substrate-level phosphorylation in the TCA. The beta subunit provides nucleotide specificity of the enzyme and binds the substrate succinate, while the binding sites for coenzyme A and phosphate are found in the alpha subunit. This is Succinate--CoA ligase [ADP-forming] subunit beta from Yersinia pseudotuberculosis serotype O:1b (strain IP 31758).